The primary structure comprises 708 residues: MASPADSCIQFTRHASDVLLNLNRLRSRDILTDVVIIVNREQFRAHKTVLMACSGLFYSIFTDQLKCNLNVINLDPEINPEGFCILLDFMYTSRLNLRENNIMAVMATALYLQMEHVVDTCRRFVKSSEAEMVSAVKTPREEFLAGRMLNHPEVMAYRGRDVSENSMPLQNGSLCNGRAFAPGLFNSLPGSSISYPGYSPLPLNGFLVDDELREMRMPLSELSRVSAFPKERIPCDGSRTIPAEYMRTITDISANMCHATIYSPKEGAAEEARSDMHYSVASGPKPVVPSIRNNPYFSCDKVAKEEERTSSEDEISQHFEPTNTPLDRKGLISPQSPQKSDCQPNSPTESSSSKNARISQNSNSLFTKSPTDPKACNWKKYKFIVLNSLNQSTKQDSADQNEMGTLSPRTYMPMSTCQQSMEPEHLNVQSPTKMSVNGEDSNIPQASRLNNIVNRSRDGSPRSSEGQSPLYMHSSKCSSCGCQSPQHTEMCLHTSGSAFGEEMGETQSEYSDSSCENGAFFCNECDCRFSEEASLKRHSLQVHSDKPYKCDRCQASFRYKGNLASHKTVHTGEKPYRCNICGAQFNRPANLKTHTRIHSGEKPYKCETCGARFVQVAHLRAHVLIHTGEKPYPCEICGTRFRHLQTLKSHLRIHTGEKPYHCEKCNLHFRHKSQLRLHLRQKHGAITNTKVQYRISANEVPPELPKAC.

The BTB domain occupies 32–99 (TDVVIIVNRE…MYTSRLNLRE (68 aa)). The segment covering 303-317 (AKEEERTSSEDEISQ) has biased composition (basic and acidic residues). Disordered regions lie at residues 303–371 (AKEE…KSPT) and 431–470 (PTKMSVNGEDSNIPQASRLNNIVNRSRDGSPRSSEGQSPL). 2 stretches are compositionally biased toward polar residues: residues 333–370 (SPQSPQKSDCQPNSPTESSSSKNARISQNSNSLFTKSP) and 431–454 (PTKMSVNGEDSNIPQASRLNNIVN). 6 consecutive C2H2-type zinc fingers follow at residues 520–543 (FFCNECDCRFSEEASLKRHSLQVH), 548–570 (YKCDRCQASFRYKGNLASHKTVH), 576–598 (YRCNICGAQFNRPANLKTHTRIH), 604–626 (YKCETCGARFVQVAHLRAHVLIH), 632–654 (YPCEICGTRFRHLQTLKSHLRIH), and 660–683 (YHCEKCNLHFRHKSQLRLHLRQKH).

It localises to the nucleus. In terms of biological role, transcriptional repressor mainly required for germinal center (GC) formation and antibody affinity maturation which has different mechanisms of action specific to the lineage and biological functions. Forms complexes with different corepressors and histone deacetylases to repress the transcriptional expression of different subsets of target genes. Represses its target genes by binding directly to the DNA sequence 5'-TTCCTAGAA-3' (BCL6-binding site) or indirectly by repressing the transcriptional activity of transcription factors. In GC B-cells, represses genes that function in differentiation, inflammation, apoptosis and cell cycle control, also autoregulates its transcriptional expression and up-regulates, indirectly, the expression of some genes important for GC reactions, such as AICDA, through the repression of microRNAs expression. An important function is to allow GC B-cells to proliferate very rapidly in response to T-cell dependent antigens and tolerate the physiological DNA breaks required for immunglobulin class switch recombination and somatic hypermutation without inducing a p53/TP53-dependent apoptotic response. In follicular helper CD4(+) T-cells (T(FH) cells), promotes the expression of T(FH)-related genes but inhibits the differentiation of T(H)1, T(H)2 and T(H)17 cells. Also required for the establishment and maintenance of immunological memory for both T- and B-cells. Suppresses macrophage proliferation through competition with STAT5 for STAT-binding motifs binding on certain target genes, such as CCL2 and CCND2. In response to genotoxic stress, controls cell cycle arrest in GC B-cells in both p53/TP53-dependedent and -independent manners. Besides, also controls neurogenesis through the alteration of the composition of NOTCH-dependent transcriptional complexes at selective NOTCH targets, such as HES5, including the recruitment of the deacetylase SIRT1 and resulting in an epigenetic silencing leading to neuronal differentiation. In Gallus gallus (Chicken), this protein is B-cell lymphoma 6 protein homolog.